The primary structure comprises 521 residues: Interleukin-9 receptor (521 aa).

Positions 1–40 are cleaved as a signal peptide; it reads MGLGRCIWEGWTLESEALRRDMGTWLLACICICTCVCLGV. The Extracellular segment spans residues 41 to 270; that stretch reads SVTGEGQGPR…GPLIPPWGWP (230 aa). N117 and N156 each carry an N-linked (GlcNAc...) asparagine glycan. The Fibronectin type-III domain occupies 149–259; sequence PPSDLQSNIS…QPVCFQAPQR (111 aa). The short motif at 245–249 is the WSXWS motif element; it reads WSEWS. Residues 271 to 291 form a helical membrane-spanning segment; it reads GNTLVAVSIFLLLTGPTYLLF. The Cytoplasmic segment spans residues 292–521; it reads KLSPRVKRIF…VLSKARSWTF (230 aa). The Box 1 motif motif lies at 301–309; the sequence is FYQNVPSPA. Residues 413 to 439 are disordered; that stretch reads WAPTSLTRPAPPDSEGSRSSSSSSSSN. Low complexity predominate over residues 429–439; that stretch reads SRSSSSSSSSN.

This sequence belongs to the type I cytokine receptor family. Type 4 subfamily. Interacts with IL9.

It is found in the cell membrane. Its subcellular location is the secreted. Plays an important role in the immune response against parasites by acting as a receptor of IL9. The polypeptide is Interleukin-9 receptor (IL9R) (Homo sapiens (Human)).